Here is a 281-residue protein sequence, read N- to C-terminus: NH(3)-dependent NAD(+) synthetase (281 aa).

Residue 24–31 (GVSGGVDS) participates in ATP binding. D30 contacts Mg(2+). Residue R145 coordinates deamido-NAD(+). T165 is a binding site for ATP. E170 is a binding site for Mg(2+). Deamido-NAD(+)-binding residues include K178 and D185. ATP contacts are provided by K194 and S216.

The protein belongs to the NAD synthetase family. Homodimer.

It catalyses the reaction deamido-NAD(+) + NH4(+) + ATP = AMP + diphosphate + NAD(+) + H(+). It participates in cofactor biosynthesis; NAD(+) biosynthesis; NAD(+) from deamido-NAD(+) (ammonia route): step 1/1. Catalyzes the ATP-dependent amidation of deamido-NAD to form NAD. Uses ammonia as a nitrogen source. In Thermotoga maritima (strain ATCC 43589 / DSM 3109 / JCM 10099 / NBRC 100826 / MSB8), this protein is NH(3)-dependent NAD(+) synthetase (nadE1).